We begin with the raw amino-acid sequence, 399 residues long: Elongation factor Tu (399 aa).

Residues 10–209 (KPHVNIGTIG…KVDEYIPTPV (200 aa)) form the tr-type G domain. The G1 stretch occupies residues 19-26 (GHVDHGKT). 19–26 (GHVDHGKT) contributes to the GTP binding site. Position 26 (Thr26) interacts with Mg(2+). The segment at 60–64 (GITIA) is G2. The tract at residues 81-84 (DCPG) is G3. Residues 81–85 (DCPGH) and 136–139 (NKAD) contribute to the GTP site. Residues 136-139 (NKAD) are G4. The tract at residues 174 to 176 (SAL) is G5.

It belongs to the TRAFAC class translation factor GTPase superfamily. Classic translation factor GTPase family. EF-Tu/EF-1A subfamily. As to quaternary structure, monomer.

The protein localises to the cytoplasm. It carries out the reaction GTP + H2O = GDP + phosphate + H(+). Functionally, GTP hydrolase that promotes the GTP-dependent binding of aminoacyl-tRNA to the A-site of ribosomes during protein biosynthesis. This chain is Elongation factor Tu, found in Campylobacter curvus (strain 525.92).